Reading from the N-terminus, the 868-residue chain is Alanine--tRNA ligase (868 aa).

Residues H556, H560, C666, and H670 each coordinate Zn(2+).

Belongs to the class-II aminoacyl-tRNA synthetase family. Requires Zn(2+) as cofactor.

The protein resides in the cytoplasm. It carries out the reaction tRNA(Ala) + L-alanine + ATP = L-alanyl-tRNA(Ala) + AMP + diphosphate. Functionally, catalyzes the attachment of alanine to tRNA(Ala) in a two-step reaction: alanine is first activated by ATP to form Ala-AMP and then transferred to the acceptor end of tRNA(Ala). Also edits incorrectly charged Ser-tRNA(Ala) and Gly-tRNA(Ala) via its editing domain. This chain is Alanine--tRNA ligase, found in Elusimicrobium minutum (strain Pei191).